The following is a 281-amino-acid chain: 2,3,4,5-tetrahydropyridine-2,6-dicarboxylate N-succinyltransferase (281 aa).

Substrate-binding residues include Arg-108 and Asp-145.

This sequence belongs to the transferase hexapeptide repeat family. Homotrimer.

The protein resides in the cytoplasm. The catalysed reaction is (S)-2,3,4,5-tetrahydrodipicolinate + succinyl-CoA + H2O = (S)-2-succinylamino-6-oxoheptanedioate + CoA. The protein operates within amino-acid biosynthesis; L-lysine biosynthesis via DAP pathway; LL-2,6-diaminopimelate from (S)-tetrahydrodipicolinate (succinylase route): step 1/3. This is 2,3,4,5-tetrahydropyridine-2,6-dicarboxylate N-succinyltransferase from Nitrobacter hamburgensis (strain DSM 10229 / NCIMB 13809 / X14).